Reading from the N-terminus, the 430-residue chain is Histidine--tRNA ligase, chloroplastic (430 aa).

Belongs to the class-II aminoacyl-tRNA synthetase family.

It localises to the plastid. The protein localises to the chloroplast. It carries out the reaction tRNA(His) + L-histidine + ATP = L-histidyl-tRNA(His) + AMP + diphosphate + H(+). The sequence is that of Histidine--tRNA ligase, chloroplastic from Pyropia yezoensis (Susabi-nori).